The following is a 603-amino-acid chain: Glutamyl-tRNA(Gln) amidotransferase subunit B, mitochondrial (603 aa).

The N-terminal 32 residues, Met-1 to Leu-32, are a transit peptide targeting the mitochondrion. A disordered region spans residues Ala-12 to Arg-59. The segment covering Ser-31–Leu-48 has biased composition (low complexity).

It belongs to the GatB/GatE family. GatB subfamily. Subunit of the heterotrimeric GatCAB amidotransferase (AdT) complex, composed of A, B and C subunits.

The protein resides in the mitochondrion. The catalysed reaction is L-glutamyl-tRNA(Gln) + L-glutamine + ATP + H2O = L-glutaminyl-tRNA(Gln) + L-glutamate + ADP + phosphate + H(+). Allows the formation of correctly charged Gln-tRNA(Gln) through the transamidation of misacylated Glu-tRNA(Gln) in the mitochondria. The reaction takes place in the presence of glutamine and ATP through an activated gamma-phospho-Glu-tRNA(Gln). The chain is Glutamyl-tRNA(Gln) amidotransferase subunit B, mitochondrial from Arthroderma otae (strain ATCC MYA-4605 / CBS 113480) (Microsporum canis).